Reading from the N-terminus, the 259-residue chain is PF03932 family protein CutC (259 aa).

This sequence belongs to the CutC family. As to quaternary structure, homodimer.

The protein localises to the cytoplasm. The polypeptide is PF03932 family protein CutC (Salmonella typhi).